The sequence spans 476 residues: Bifunctional protein HldE (476 aa).

The interval 1–318 is ribokinase; the sequence is MKPTLPNYDQ…AEAIHGSQDS (318 aa). 195-198 contributes to the ATP binding site; that stretch reads NMLE. Residue Asp264 is part of the active site. The interval 344–476 is cytidylyltransferase; that stretch reads MTNGCFDILH…IIEAIKGGRG (133 aa).

In the N-terminal section; belongs to the carbohydrate kinase PfkB family. It in the C-terminal section; belongs to the cytidylyltransferase family. In terms of assembly, homodimer.

The catalysed reaction is D-glycero-beta-D-manno-heptose 7-phosphate + ATP = D-glycero-beta-D-manno-heptose 1,7-bisphosphate + ADP + H(+). It carries out the reaction D-glycero-beta-D-manno-heptose 1-phosphate + ATP + H(+) = ADP-D-glycero-beta-D-manno-heptose + diphosphate. Its pathway is nucleotide-sugar biosynthesis; ADP-L-glycero-beta-D-manno-heptose biosynthesis; ADP-L-glycero-beta-D-manno-heptose from D-glycero-beta-D-manno-heptose 7-phosphate: step 1/4. The protein operates within nucleotide-sugar biosynthesis; ADP-L-glycero-beta-D-manno-heptose biosynthesis; ADP-L-glycero-beta-D-manno-heptose from D-glycero-beta-D-manno-heptose 7-phosphate: step 3/4. Its function is as follows. Catalyzes the phosphorylation of D-glycero-D-manno-heptose 7-phosphate at the C-1 position to selectively form D-glycero-beta-D-manno-heptose-1,7-bisphosphate. Catalyzes the ADP transfer from ATP to D-glycero-beta-D-manno-heptose 1-phosphate, yielding ADP-D-glycero-beta-D-manno-heptose. This is Bifunctional protein HldE from Aliivibrio salmonicida (strain LFI1238) (Vibrio salmonicida (strain LFI1238)).